A 493-amino-acid chain; its full sequence is Glutamyl-tRNA(Gln) amidotransferase subunit A (493 aa).

Catalysis depends on charge relay system residues lysine 78 and serine 158. The active-site Acyl-ester intermediate is serine 182.

Belongs to the amidase family. GatA subfamily. In terms of assembly, heterotrimer of A, B and C subunits.

It catalyses the reaction L-glutamyl-tRNA(Gln) + L-glutamine + ATP + H2O = L-glutaminyl-tRNA(Gln) + L-glutamate + ADP + phosphate + H(+). Allows the formation of correctly charged Gln-tRNA(Gln) through the transamidation of misacylated Glu-tRNA(Gln) in organisms which lack glutaminyl-tRNA synthetase. The reaction takes place in the presence of glutamine and ATP through an activated gamma-phospho-Glu-tRNA(Gln). This Methylorubrum extorquens (strain CM4 / NCIMB 13688) (Methylobacterium extorquens) protein is Glutamyl-tRNA(Gln) amidotransferase subunit A.